A 147-amino-acid polypeptide reads, in one-letter code: Hemoglobin subunit epsilon (147 aa).

The region spanning 3–147 (HFTAEEKAII…VATALAHKYH (145 aa)) is the Globin domain. Phosphoserine is present on residues Ser14 and Ser51. Positions 64 and 93 each coordinate heme b.

It belongs to the globin family. Heterotetramer of two alpha chains and two epsilon chains in early embryonic hemoglobin Gower-2; two zeta chains and two epsilon chains in early embryonic hemoglobin Gower-1. As to expression, red blood cells.

In terms of biological role, the epsilon chain is a beta-type chain of early mammalian embryonic hemoglobin. The polypeptide is Hemoglobin subunit epsilon (HBE1) (Otolemur crassicaudatus (Brown greater galago)).